The primary structure comprises 257 residues: tRNA pseudouridine synthase A (257 aa).

Catalysis depends on Asp53, which acts as the Nucleophile. Tyr111 contributes to the substrate binding site.

Belongs to the tRNA pseudouridine synthase TruA family. As to quaternary structure, homodimer.

The catalysed reaction is uridine(38/39/40) in tRNA = pseudouridine(38/39/40) in tRNA. Formation of pseudouridine at positions 38, 39 and 40 in the anticodon stem and loop of transfer RNAs. This is tRNA pseudouridine synthase A from Xylella fastidiosa (strain M23).